The following is a 290-amino-acid chain: Shikimate dehydrogenase (NADP(+)) (290 aa).

Shikimate is bound by residues 18-20 and Thr-66; that span reads SYS. The Proton acceptor role is filled by Lys-70. Positions 91 and 106 each coordinate shikimate. NADP(+) contacts are provided by residues 130–134 and Met-230; that span reads GNGGA. Tyr-232 provides a ligand contact to shikimate. An NADP(+)-binding site is contributed by Gly-253.

This sequence belongs to the shikimate dehydrogenase family. As to quaternary structure, homodimer.

It carries out the reaction shikimate + NADP(+) = 3-dehydroshikimate + NADPH + H(+). It participates in metabolic intermediate biosynthesis; chorismate biosynthesis; chorismate from D-erythrose 4-phosphate and phosphoenolpyruvate: step 4/7. Involved in the biosynthesis of the chorismate, which leads to the biosynthesis of aromatic amino acids. Catalyzes the reversible NADPH linked reduction of 3-dehydroshikimate (DHSA) to yield shikimate (SA). This Prosthecochloris aestuarii (strain DSM 271 / SK 413) protein is Shikimate dehydrogenase (NADP(+)).